Consider the following 271-residue polypeptide: Bifunctional protein FolD (271 aa).

NADP(+) contacts are provided by residues 154 to 156, Ser-181, and Ile-222; that span reads GRS.

It belongs to the tetrahydrofolate dehydrogenase/cyclohydrolase family. In terms of assembly, homodimer.

The enzyme catalyses (6R)-5,10-methylene-5,6,7,8-tetrahydrofolate + NADP(+) = (6R)-5,10-methenyltetrahydrofolate + NADPH. The catalysed reaction is (6R)-5,10-methenyltetrahydrofolate + H2O = (6R)-10-formyltetrahydrofolate + H(+). It participates in one-carbon metabolism; tetrahydrofolate interconversion. In terms of biological role, catalyzes the oxidation of 5,10-methylenetetrahydrofolate to 5,10-methenyltetrahydrofolate and then the hydrolysis of 5,10-methenyltetrahydrofolate to 10-formyltetrahydrofolate. The chain is Bifunctional protein FolD from Thermotoga petrophila (strain ATCC BAA-488 / DSM 13995 / JCM 10881 / RKU-1).